A 117-amino-acid chain; its full sequence is Histone-like protein Hq1 (117 aa).

Composition is skewed to basic residues over residues 1–17 (MPAK…RSKA) and 39–50 (RKLRAAQKKLAK). A disordered region spans residues 1 to 117 (MPAKKRKTTR…RGRGRPRKKA (117 aa)). Residues 51–68 (AKKDASRKLAKLRKEAAR) are compositionally biased toward basic and acidic residues. Basic residues predominate over residues 71-117 (AAAKKTRAPSKKGRKKATRKKGGGRSRKTARKVSTMKRGRGRPRKKA).

In terms of biological role, binds DNA in vitro. The polypeptide is Histone-like protein Hq1 (hcbA) (Coxiella burnetii (strain RSA 493 / Nine Mile phase I)).